A 320-amino-acid polypeptide reads, in one-letter code: ATP-dependent 6-phosphofructokinase (320 aa).

Position 12 (glycine 12) interacts with ATP. ADP is bound by residues 22 to 26 and 55 to 60; these read RGVVR and RYSVSD. ATP-binding positions include 73-74 and 103-106; these read RF and GDGS. Aspartate 104 is a Mg(2+) binding site. 126-128 contributes to the substrate binding site; that stretch reads TID. The active-site Proton acceptor is the aspartate 128. Residue arginine 155 participates in ADP binding. Residues arginine 163 and 170–172 each bind substrate; that span reads MGR. Residues 186–188, lysine 212, and 214–216 contribute to the ADP site; these read GCE and KKH. Substrate-binding positions include glutamate 223, arginine 244, and 250–253; that span reads HIQR.

The protein belongs to the phosphofructokinase type A (PFKA) family. ATP-dependent PFK group I subfamily. Prokaryotic clade 'B1' sub-subfamily. In terms of assembly, homotetramer. It depends on Mg(2+) as a cofactor.

The protein resides in the cytoplasm. The enzyme catalyses beta-D-fructose 6-phosphate + ATP = beta-D-fructose 1,6-bisphosphate + ADP + H(+). The protein operates within carbohydrate degradation; glycolysis; D-glyceraldehyde 3-phosphate and glycerone phosphate from D-glucose: step 3/4. Allosterically activated by ADP and other diphosphonucleosides, and allosterically inhibited by phosphoenolpyruvate. In terms of biological role, catalyzes the phosphorylation of D-fructose 6-phosphate to fructose 1,6-bisphosphate by ATP, the first committing step of glycolysis. The polypeptide is ATP-dependent 6-phosphofructokinase (Pectobacterium carotovorum subsp. carotovorum (strain PC1)).